The sequence spans 160 residues: Lipoprotein signal peptidase (160 aa).

A run of 3 helical transmembrane segments spans residues isoleucine 13–isoleucine 33, tryptophan 72–leucine 92, and serine 104–valine 124. Catalysis depends on residues aspartate 125 and aspartate 143. The helical transmembrane segment at tryptophan 134 to methionine 154 threads the bilayer.

The protein belongs to the peptidase A8 family.

The protein resides in the cell inner membrane. The catalysed reaction is Release of signal peptides from bacterial membrane prolipoproteins. Hydrolyzes -Xaa-Yaa-Zaa-|-(S,diacylglyceryl)Cys-, in which Xaa is hydrophobic (preferably Leu), and Yaa (Ala or Ser) and Zaa (Gly or Ala) have small, neutral side chains.. Its pathway is protein modification; lipoprotein biosynthesis (signal peptide cleavage). In terms of biological role, this protein specifically catalyzes the removal of signal peptides from prolipoproteins. This chain is Lipoprotein signal peptidase, found in Buchnera aphidicola subsp. Acyrthosiphon pisum (strain 5A).